A 344-amino-acid chain; its full sequence is tRNA N6-adenosine threonylcarbamoyltransferase (344 aa).

Fe cation contacts are provided by histidine 119 and histidine 123. Substrate is bound by residues 141–145 (VVSGG), aspartate 174, glycine 187, aspartate 191, and asparagine 280. Aspartate 310 is a binding site for Fe cation.

The protein belongs to the KAE1 / TsaD family. Requires Fe(2+) as cofactor.

Its subcellular location is the cytoplasm. The catalysed reaction is L-threonylcarbamoyladenylate + adenosine(37) in tRNA = N(6)-L-threonylcarbamoyladenosine(37) in tRNA + AMP + H(+). Its function is as follows. Required for the formation of a threonylcarbamoyl group on adenosine at position 37 (t(6)A37) in tRNAs that read codons beginning with adenine. Is involved in the transfer of the threonylcarbamoyl moiety of threonylcarbamoyl-AMP (TC-AMP) to the N6 group of A37, together with TsaE and TsaB. TsaD likely plays a direct catalytic role in this reaction. The sequence is that of tRNA N6-adenosine threonylcarbamoyltransferase from Listeria welshimeri serovar 6b (strain ATCC 35897 / DSM 20650 / CCUG 15529 / CIP 8149 / NCTC 11857 / SLCC 5334 / V8).